Here is a 706-residue protein sequence, read N- to C-terminus: Polyribonucleotide nucleotidyltransferase (706 aa).

Mg(2+) contacts are provided by Asp486 and Asp492. Residues 553-612 (PRIHTIKISTDKIKDVIGKGGSVIRALTEETGTTIEIEDDGTVRIASTDGEKAKHAIRRI) enclose the KH domain. An S1 motif domain is found at 622–690 (GRVYQGKVTR…RQGRVRLSIK (69 aa)).

This sequence belongs to the polyribonucleotide nucleotidyltransferase family. In terms of assembly, component of the RNA degradosome, which is a multiprotein complex involved in RNA processing and mRNA degradation. Mg(2+) serves as cofactor.

Its subcellular location is the cytoplasm. The catalysed reaction is RNA(n+1) + phosphate = RNA(n) + a ribonucleoside 5'-diphosphate. In terms of biological role, involved in mRNA degradation. Catalyzes the phosphorolysis of single-stranded polyribonucleotides processively in the 3'- to 5'-direction. The chain is Polyribonucleotide nucleotidyltransferase from Pectobacterium atrosepticum (strain SCRI 1043 / ATCC BAA-672) (Erwinia carotovora subsp. atroseptica).